A 289-amino-acid chain; its full sequence is UTP--glucose-1-phosphate uridylyltransferase 2 (289 aa).

Belongs to the UDPGP type 2 family.

It catalyses the reaction alpha-D-glucose 1-phosphate + UTP + H(+) = UDP-alpha-D-glucose + diphosphate. It functions in the pathway glycolipid metabolism; diglucosyl-diacylglycerol biosynthesis. In terms of biological role, catalyzes the formation of UDP-glucose from glucose-1-phosphate and UTP. This is an intermediate step in the biosynthesis of diglucosyl-diacylglycerol (Glc2-DAG), i.e. a glycolipid found in the membrane, which is also used as a membrane anchor for lipoteichoic acid (LTA). This Staphylococcus saprophyticus subsp. saprophyticus (strain ATCC 15305 / DSM 20229 / NCIMB 8711 / NCTC 7292 / S-41) protein is UTP--glucose-1-phosphate uridylyltransferase 2 (gtaB2).